The sequence spans 186 residues: dCTP deaminase (186 aa).

107–112 (KSTYAR) serves as a coordination point for dCTP. Catalysis depends on glutamate 133, which acts as the Proton donor/acceptor. Residues glutamine 152, tyrosine 166, and glutamine 176 each contribute to the dCTP site.

This sequence belongs to the dCTP deaminase family. Homotrimer.

It catalyses the reaction dCTP + H2O + H(+) = dUTP + NH4(+). It functions in the pathway pyrimidine metabolism; dUMP biosynthesis; dUMP from dCTP (dUTP route): step 1/2. In terms of biological role, catalyzes the deamination of dCTP to dUTP. This chain is dCTP deaminase, found in Campylobacter jejuni subsp. jejuni serotype O:6 (strain 81116 / NCTC 11828).